Here is an 8903-residue protein sequence, read N- to C-terminus: Nonribosomal peptide synthetase vlms (8903 aa).

Positions Gly-11–Asn-84 constitute a Carrier 1 domain. The tract at residues Cys-13 to Asp-81 is thiolation (T) domain 1. Residue Ser-45 is modified to O-(pantetheine 4'-phosphoryl)serine. Adenylation (A) domain regions lie at residues Gly-59–Pro-736 and Met-989–Arg-1386. Residues Val-572–Ile-953 form a condensation (C) domain 1 region. Positions Ser-1524–Ala-1600 constitute a Carrier 2 domain. The thiolation (T) domain 2 stretch occupies residues Val-1529 to Glu-1597. Position 1561 is an O-(pantetheine 4'-phosphoryl)serine (Ser-1561). Residues Phe-1613–Ala-2050 form an epimerase (E) domain 1 region. Residues Asp-2091 to Leu-2523 form a condensation (C) domain 2 region. Positions Met-2546–Arg-2943 are adenylation (A) domain 2. A Carrier 3 domain is found at Leu-3084–Asp-3160. The segment at Ile-3089–Lys-3157 is thiolation (T) domain 3. Ser-3121 is subject to O-(pantetheine 4'-phosphoryl)serine. The segment at Phe-3174–Met-3614 is epimerase (E) domain 2. Residues Glu-3655–Leu-4093 are condensation (C) domain 3. An adenylation (A) domain 3 region spans residues Glu-4114–Arg-4512. Residues Ala-4649–Cys-4725 form the Carrier 4 domain. The interval Met-4654–Glu-4722 is thiolation (T) domain 4. Position 4686 is an O-(pantetheine 4'-phosphoryl)serine (Ser-4686). The segment at Glu-4775–Asp-5191 is condensation (C) domain 4. The interval Glu-5216 to Arg-5614 is adenylation (A) domain 4. The 77-residue stretch at Ala-5753–His-5829 folds into the Carrier 5 domain. The thiolation (T) domain 5 stretch occupies residues Met-5758–Glu-5826. Ser-5790 carries the post-translational modification O-(pantetheine 4'-phosphoryl)serine. Residue Glu-5875 is a region of interest, condensation (C) domain 5. Residues Glu-6311–Arg-6702 are adenylation (A) domain 5. One can recognise a Carrier 6 domain in the interval Ser-6836–Asp-6912. The interval Thr-6841–Glu-6909 is thiolation (T) domain 6. Ser-6873 bears the O-(pantetheine 4'-phosphoryl)serine mark. The interval Gly-6923–Glu-7349 is epimerase (E) domain 3. A condensation (C) domain 6 region spans residues Glu-7391 to Ile-7823. The interval Glu-7844 to Ile-8240 is adenylation (A) domain 6. Residues Ala-8368 to Ser-8444 form the Carrier 7 domain. The tract at residues Pro-8369 to Ser-8441 is thiolation (T) domain 7. O-(pantetheine 4'-phosphoryl)serine is present on Ser-8405. A condensation (C) domain 7 region spans residues Asp-8482–His-8897.

The protein belongs to the NRP synthetase family.

The protein operates within secondary metabolite biosynthesis. In terms of biological role, nonribosomal peptide synthetase; part of the gene cluster that mediates the biosynthesis of verlamelin, a lipopeptide that exhibits antifungal activity against plant pathogenic fungi. Verlamelin is a cyclic hexadepsipeptide and is bridged by ester bonding between a 5-hydroxytetradecanoic acid moiety and a carboxyl group on the terminal Val of amide-bonded tetradecanoyl-hexapeptide D-allo-Thr-D-Ala-L-Pro-L-Gln-D-Tyr-L-Val. VlmA and vlmB are altogether regarded as essential components in the biosynthesis of 5-hydroxytetradecanoic acid. VlmA catalyzes the hydroxylation at position C5 of tetradecanoic acid produced in primary metabolism, while the precise function of vlmB still remains to be solved. To be loaded onto the waiting NRPS, 5-hydroxytetradecanoic acid is activated in the form of acyladenylate by the AMP-dependent ligase vlmC. VlmS seems to accept the fatty-acyl intermediate onto the initial module to further elongate amino acid residues by the downstream modules. In addition, in the last module at its C-terminus, vlmS contains a surplus condensation (C) domain that may be involved in cyclization, the last step to form verlamelin. The sequence is that of Nonribosomal peptide synthetase vlms from Lecanicillium sp.